A 331-amino-acid polypeptide reads, in one-letter code: Ketol-acid reductoisomerase (NADP(+)) (331 aa).

In terms of domain architecture, KARI N-terminal Rossmann spans 2 to 182 (ARMYYDADAQ…GGTRAGILET (181 aa)). NADP(+)-binding positions include 25–28 (YGSQ), Ser-51, Ser-53, and 83–86 (DEVQ). His-108 is an active-site residue. Residue Gly-134 coordinates NADP(+). One can recognise a KARI C-terminal knotted domain in the interval 183-328 (TFREETETDL…QELRSMFSWL (146 aa)). Residues Asp-191, Glu-195, Glu-227, and Glu-231 each coordinate Mg(2+). Residue Ser-252 participates in substrate binding.

Belongs to the ketol-acid reductoisomerase family. Mg(2+) is required as a cofactor.

The enzyme catalyses (2R)-2,3-dihydroxy-3-methylbutanoate + NADP(+) = (2S)-2-acetolactate + NADPH + H(+). It catalyses the reaction (2R,3R)-2,3-dihydroxy-3-methylpentanoate + NADP(+) = (S)-2-ethyl-2-hydroxy-3-oxobutanoate + NADPH + H(+). The protein operates within amino-acid biosynthesis; L-isoleucine biosynthesis; L-isoleucine from 2-oxobutanoate: step 2/4. Its pathway is amino-acid biosynthesis; L-valine biosynthesis; L-valine from pyruvate: step 2/4. Functionally, involved in the biosynthesis of branched-chain amino acids (BCAA). Catalyzes an alkyl-migration followed by a ketol-acid reduction of (S)-2-acetolactate (S2AL) to yield (R)-2,3-dihydroxy-isovalerate. In the isomerase reaction, S2AL is rearranged via a Mg-dependent methyl migration to produce 3-hydroxy-3-methyl-2-ketobutyrate (HMKB). In the reductase reaction, this 2-ketoacid undergoes a metal-dependent reduction by NADPH to yield (R)-2,3-dihydroxy-isovalerate. The polypeptide is Ketol-acid reductoisomerase (NADP(+)) (Thermosynechococcus vestitus (strain NIES-2133 / IAM M-273 / BP-1)).